The following is a 226-amino-acid chain: Cytochrome c-553I (226 aa).

Positions 1–22 (MTSKTTASLLAICVACAASAIA) are cleaved as a signal peptide. Residues 43–68 (AAVSGDAHEQPAAEAPAEEEEETPAV) are disordered. Residues C125, C128, H129, and M173 each coordinate heme. Residues 203–226 (RGRPAKREDKSDEFVAQEDSCMSG) are disordered.

Binds 1 heme group per subunit.

It localises to the periplasm. The chain is Cytochrome c-553I (cycB) from Paracoccus denitrificans.